The following is a 166-amino-acid chain: Crossover junction endodeoxyribonuclease RuvC (166 aa).

Active-site residues include aspartate 9, glutamate 70, and aspartate 144. Residues aspartate 9, glutamate 70, and aspartate 144 each coordinate Mg(2+).

Belongs to the RuvC family. As to quaternary structure, homodimer which binds Holliday junction (HJ) DNA. The HJ becomes 2-fold symmetrical on binding to RuvC with unstacked arms; it has a different conformation from HJ DNA in complex with RuvA. In the full resolvosome a probable DNA-RuvA(4)-RuvB(12)-RuvC(2) complex forms which resolves the HJ. The cofactor is Mg(2+).

The protein localises to the cytoplasm. The catalysed reaction is Endonucleolytic cleavage at a junction such as a reciprocal single-stranded crossover between two homologous DNA duplexes (Holliday junction).. Its function is as follows. The RuvA-RuvB-RuvC complex processes Holliday junction (HJ) DNA during genetic recombination and DNA repair. Endonuclease that resolves HJ intermediates. Cleaves cruciform DNA by making single-stranded nicks across the HJ at symmetrical positions within the homologous arms, yielding a 5'-phosphate and a 3'-hydroxyl group; requires a central core of homology in the junction. The consensus cleavage sequence is 5'-(A/T)TT(C/G)-3'. Cleavage occurs on the 3'-side of the TT dinucleotide at the point of strand exchange. HJ branch migration catalyzed by RuvA-RuvB allows RuvC to scan DNA until it finds its consensus sequence, where it cleaves and resolves the cruciform DNA. This chain is Crossover junction endodeoxyribonuclease RuvC, found in Neorickettsia sennetsu (strain ATCC VR-367 / Miyayama) (Ehrlichia sennetsu).